Consider the following 473-residue polypeptide: Dihydrolipoyl dehydrogenase (473 aa).

Residues 36–45 (ERYDKLGGVC), K54, and A117 contribute to the FAD site. A disulfide bridge connects residues C45 and C50. NAD(+) is bound by residues 182 to 186 (GSGII), D205, and 270 to 273 (AIGR). Residues D313 and A321 each contribute to the FAD site. The Proton acceptor role is filled by H445.

It belongs to the class-I pyridine nucleotide-disulfide oxidoreductase family. As to quaternary structure, homodimer. It depends on FAD as a cofactor.

The protein resides in the cytoplasm. It catalyses the reaction N(6)-[(R)-dihydrolipoyl]-L-lysyl-[protein] + NAD(+) = N(6)-[(R)-lipoyl]-L-lysyl-[protein] + NADH + H(+). In terms of biological role, lipoamide dehydrogenase is a component of the alpha-ketoacid dehydrogenase complexes. The protein is Dihydrolipoyl dehydrogenase (lpdA) of Buchnera aphidicola subsp. Acyrthosiphon pisum (strain APS) (Acyrthosiphon pisum symbiotic bacterium).